The chain runs to 689 residues: MNLLSHQLRDRFPIKAIISKADEVIFANYKHTNDFFKITATTYALINSVIVSNNCCNRRFHSTWQKKKHDDLTATVPVIDFRKNQKLTSIVVNAIQAIYWYARRSNCLTGINEAEYIWKSLIPESIFYHFVSLQSFIRKYLTDVFYCSAQKVILLSTDDSVVSSEKLYIRIASILSNANDKVSFKESSINTNTVFKDVYVEVSSHNDEFLLKNSSKCWAFTSLLVDPLHFMFSQIVFEDLSGKKIMKFEDTAVSTASNHSKQFTKGNLLAIKYIGGLYNAVYLMGLKKNLLAFVENEKDDLFVAKIFLLAYSSSKNRKKIVPVDVWDAMIDSLYETINVEETKKETYKFTRSIKTVIPNKLISNESISILSIPESEKTIYQNFDLYVSKFNVARKELSEKELFNNSFSSSFNTLLASLLVKPTLCLISYLMIAKKMVVLQEANRLFLKSFAHPFHLERYHLHAVAAMGGLYQIMSSTHLKNLFFCSRKGIALTKLHSQQYNESTLFQYLSEFVHQRQKSLTPKQRIAIQELILKFMQRNFENSLYHQSFSSHWFISRLLINPIRMLCWHITDVGKTLDLGEAEKLLKYNHKQCPYIIYPSSLKAVQKLGGLQCIIRNDNLSHIFNCSRKYIRVQRYSDDDLSESSLLPRLVNLLLFFENSMGEVAWNKLSQTLMDMFEKETKSNSLSDY.

It localises to the mitochondrion. This is an uncharacterized protein from Schizosaccharomyces pombe (strain 972 / ATCC 24843) (Fission yeast).